Here is a 129-residue protein sequence, read N- to C-terminus: uncharacterized protein (129 aa).

The N-terminal stretch at 1 to 24 is a signal peptide; it reads MAFGWHSMHGSIIWFLQIAQLSTA. 2 helical membrane passes run 38 to 58 and 95 to 115; these read ISNLFFLVSTGALWFELCAIF and IAHIEAHTSIVGFMISLFTPL.

The protein localises to the membrane. This is an uncharacterized protein from Saccharomyces cerevisiae (strain ATCC 204508 / S288c) (Baker's yeast).